We begin with the raw amino-acid sequence, 228 residues long: uncharacterized protein (228 aa).

The signal sequence occupies residues 1–15 (MKQKYLFIASMALAG). The N-palmitoyl cysteine moiety is linked to residue C16. C16 is lipidated: S-diacylglycerol cysteine.

This sequence to P.multocida PM0015.

It is found in the cell membrane. This is an uncharacterized protein from Pasteurella multocida (strain Pm70).